Reading from the N-terminus, the 257-residue chain is MLKLYDVEVGSRLLLGTARYPSPAVLAEAVRRAKTEIVTVSLRREAAGGKAGGAFFELIRELGVRVLPNTAGCHSVQEAVLTAKLARDVFRTDWIKLEVIGHHDTLQPDVFGLVEAARILSGEGFQVFPYTTDDLVVAEKLLDAGCRVLMPWCAPIGSAMGPVNPMALRAFRAHFPDVPLIVDAGVGRPSHAAAVMEYGYDAVLLNTAVAGAGDPAAMAEAFALAIDAGRIAHSAVPLEPRDMAVPSTPVIGKAVFS.

Lys-96 serves as the catalytic Schiff-base intermediate with DXP. Residues Gly-157, 184–185 (AG), and 206–207 (NT) contribute to the 1-deoxy-D-xylulose 5-phosphate site.

This sequence belongs to the ThiG family. Homotetramer. Forms heterodimers with either ThiH or ThiS.

It is found in the cytoplasm. The enzyme catalyses [ThiS sulfur-carrier protein]-C-terminal-Gly-aminoethanethioate + 2-iminoacetate + 1-deoxy-D-xylulose 5-phosphate = [ThiS sulfur-carrier protein]-C-terminal Gly-Gly + 2-[(2R,5Z)-2-carboxy-4-methylthiazol-5(2H)-ylidene]ethyl phosphate + 2 H2O + H(+). It functions in the pathway cofactor biosynthesis; thiamine diphosphate biosynthesis. Functionally, catalyzes the rearrangement of 1-deoxy-D-xylulose 5-phosphate (DXP) to produce the thiazole phosphate moiety of thiamine. Sulfur is provided by the thiocarboxylate moiety of the carrier protein ThiS. In vitro, sulfur can be provided by H(2)S. The protein is Thiazole synthase of Rhizobium etli (strain ATCC 51251 / DSM 11541 / JCM 21823 / NBRC 15573 / CFN 42).